The following is a 103-amino-acid chain: UPF0235 protein Dole_0289 (103 aa).

Belongs to the UPF0235 family.

In Desulfosudis oleivorans (strain DSM 6200 / JCM 39069 / Hxd3) (Desulfococcus oleovorans), this protein is UPF0235 protein Dole_0289.